A 250-amino-acid chain; its full sequence is MTYTVIIPARFASSRLPGKPLADINGKPMVVHVMERALESGAQRVIVATDHPDVETAVKQAGGEVCLTRADHNSGTERLAEVIERYGFTDDDIIVNVQGDEPLIPSVIIRQVAENLAASKAGMATLAVPIETSEEAFNPNAVKVVTDAEGYALYFSRATIPWDRERFAQSKETIGDHFLRHLGIYAYRAGFVRRYVSWAPSQLEQIELLEQLRVLWYGEKIHVAVAKAVPSVGVDTPEDLARVRHVMANR.

Belongs to the KdsB family.

Its subcellular location is the cytoplasm. The enzyme catalyses 3-deoxy-alpha-D-manno-oct-2-ulosonate + CTP = CMP-3-deoxy-beta-D-manno-octulosonate + diphosphate. Its pathway is nucleotide-sugar biosynthesis; CMP-3-deoxy-D-manno-octulosonate biosynthesis; CMP-3-deoxy-D-manno-octulosonate from 3-deoxy-D-manno-octulosonate and CTP: step 1/1. It functions in the pathway bacterial outer membrane biogenesis; lipopolysaccharide biosynthesis. Functionally, activates KDO (a required 8-carbon sugar) for incorporation into bacterial lipopolysaccharide in Gram-negative bacteria. This chain is 3-deoxy-manno-octulosonate cytidylyltransferase, found in Pectobacterium carotovorum subsp. carotovorum (strain PC1).